Reading from the N-terminus, the 136-residue chain is uncharacterized protein (136 aa).

The chain crosses the membrane as a helical span at residues phenylalanine 102 to valine 118.

The protein resides in the membrane. This is an uncharacterized protein from Saccharomyces cerevisiae (strain ATCC 204508 / S288c) (Baker's yeast).